The chain runs to 282 residues: Hydroxyacylglutathione hydrolase-like protein (282 aa).

Residues His-54, His-56, Asp-58, His-59, His-110, Asp-134, and His-173 each contribute to the Zn(2+) site.

This sequence belongs to the metallo-beta-lactamase superfamily. Glyoxalase II family. Zn(2+) serves as cofactor.

Its function is as follows. Hydrolase acting on ester bonds. This Gallus gallus (Chicken) protein is Hydroxyacylglutathione hydrolase-like protein (HAGHL).